A 165-amino-acid chain; its full sequence is Cyclic pyranopterin monophosphate synthase (165 aa).

Substrate-binding positions include 83–85 and 120–121; these read FCH and ME. The active site involves Asp-135.

Belongs to the MoaC family. Homohexamer; trimer of dimers.

The enzyme catalyses (8S)-3',8-cyclo-7,8-dihydroguanosine 5'-triphosphate = cyclic pyranopterin phosphate + diphosphate. Its pathway is cofactor biosynthesis; molybdopterin biosynthesis. Its function is as follows. Catalyzes the conversion of (8S)-3',8-cyclo-7,8-dihydroguanosine 5'-triphosphate to cyclic pyranopterin monophosphate (cPMP). The sequence is that of Cyclic pyranopterin monophosphate synthase from Xanthomonas campestris pv. campestris (strain B100).